We begin with the raw amino-acid sequence, 362 residues long: Peptide chain release factor 1 (362 aa).

Gln-237 bears the N5-methylglutamine mark. Positions Glu-285–Thr-295 are enriched in basic and acidic residues. The disordered stretch occupies residues Glu-285–Thr-311.

This sequence belongs to the prokaryotic/mitochondrial release factor family. In terms of processing, methylated by PrmC. Methylation increases the termination efficiency of RF1.

The protein localises to the cytoplasm. Peptide chain release factor 1 directs the termination of translation in response to the peptide chain termination codons UAG and UAA. This Photobacterium profundum (strain SS9) protein is Peptide chain release factor 1.